An 881-amino-acid chain; its full sequence is Alanine--tRNA ligase (881 aa).

Zn(2+)-binding residues include His-563, His-567, Cys-672, and His-676.

The protein belongs to the class-II aminoacyl-tRNA synthetase family. It depends on Zn(2+) as a cofactor.

The protein resides in the cytoplasm. It catalyses the reaction tRNA(Ala) + L-alanine + ATP = L-alanyl-tRNA(Ala) + AMP + diphosphate. Functionally, catalyzes the attachment of alanine to tRNA(Ala) in a two-step reaction: alanine is first activated by ATP to form Ala-AMP and then transferred to the acceptor end of tRNA(Ala). Also edits incorrectly charged Ser-tRNA(Ala) and Gly-tRNA(Ala) via its editing domain. In Azorhizobium caulinodans (strain ATCC 43989 / DSM 5975 / JCM 20966 / LMG 6465 / NBRC 14845 / NCIMB 13405 / ORS 571), this protein is Alanine--tRNA ligase.